A 327-amino-acid polypeptide reads, in one-letter code: ATP-dependent 6-phosphofructokinase (327 aa).

An ATP-binding site is contributed by G12. Residues 22-26 (RGVVR) and 55-60 (RYSVSD) contribute to the ADP site. Residues 73–74 (RF) and 103–106 (GDGS) each bind ATP. D104 provides a ligand contact to Mg(2+). Position 127–129 (127–129 (TID)) interacts with substrate. D129 functions as the Proton acceptor in the catalytic mechanism. Residue R156 participates in ADP binding. Substrate contacts are provided by residues R164 and 171–173 (MGR). ADP-binding positions include 187 to 189 (GCE), K213, and 215 to 217 (KKH). Residues E224, R245, and 251–254 (HIQR) each bind substrate.

The protein belongs to the phosphofructokinase type A (PFKA) family. ATP-dependent PFK group I subfamily. Prokaryotic clade 'B1' sub-subfamily. In terms of assembly, homotetramer. Mg(2+) is required as a cofactor.

The protein resides in the cytoplasm. The enzyme catalyses beta-D-fructose 6-phosphate + ATP = beta-D-fructose 1,6-bisphosphate + ADP + H(+). Its pathway is carbohydrate degradation; glycolysis; D-glyceraldehyde 3-phosphate and glycerone phosphate from D-glucose: step 3/4. Its activity is regulated as follows. Allosterically activated by ADP and other diphosphonucleosides, and allosterically inhibited by phosphoenolpyruvate. Functionally, catalyzes the phosphorylation of D-fructose 6-phosphate to fructose 1,6-bisphosphate by ATP, the first committing step of glycolysis. The chain is ATP-dependent 6-phosphofructokinase from Hamiltonella defensa subsp. Acyrthosiphon pisum (strain 5AT).